The sequence spans 286 residues: Ribosomal RNA small subunit methyltransferase A (286 aa).

Residues asparagine 28, leucine 30, glycine 55, glutamate 77, aspartate 103, and asparagine 123 each contribute to the S-adenosyl-L-methionine site.

It belongs to the class I-like SAM-binding methyltransferase superfamily. rRNA adenine N(6)-methyltransferase family. RsmA subfamily.

The protein resides in the cytoplasm. It carries out the reaction adenosine(1518)/adenosine(1519) in 16S rRNA + 4 S-adenosyl-L-methionine = N(6)-dimethyladenosine(1518)/N(6)-dimethyladenosine(1519) in 16S rRNA + 4 S-adenosyl-L-homocysteine + 4 H(+). Specifically dimethylates two adjacent adenosines (A1518 and A1519) in the loop of a conserved hairpin near the 3'-end of 16S rRNA in the 30S particle. May play a critical role in biogenesis of 30S subunits. The sequence is that of Ribosomal RNA small subunit methyltransferase A from Bradyrhizobium sp. (strain ORS 278).